Consider the following 400-residue polypeptide: Queuine tRNA-ribosyltransferase catalytic subunit (400 aa).

Asp89 functions as the Proton acceptor in the catalytic mechanism. Substrate-binding positions include 89 to 93, Asp143, Gln185, and Gly212; that span reads DSGGF. Residues 243–249 form an RNA binding region; it reads GVGFPVD. The active-site Nucleophile is Asp262. Residues 267–271 form an RNA binding; important for wobble base 34 recognition region; that stretch reads TRTAR. Residues Cys301, Cys303, Cys306, and His331 each coordinate Zn(2+).

Belongs to the queuine tRNA-ribosyltransferase family. Heterodimer of a catalytic subunit and an accessory subunit. The cofactor is Zn(2+).

The protein resides in the cytoplasm. The catalysed reaction is guanosine(34) in tRNA + queuine = queuosine(34) in tRNA + guanine. Its function is as follows. Catalytic subunit of the queuine tRNA-ribosyltransferase (TGT) that catalyzes the base-exchange of a guanine (G) residue with queuine (Q) at position 34 (anticodon wobble position) in tRNAs with GU(N) anticodons (tRNA-Asp, -Asn, -His and -Tyr), resulting in the hypermodified nucleoside queuosine (7-(((4,5-cis-dihydroxy-2-cyclopenten-1-yl)amino)methyl)-7-deazaguanosine). Catalysis occurs through a double-displacement mechanism. The nucleophile active site attacks the C1' of nucleotide 34 to detach the guanine base from the RNA, forming a covalent enzyme-RNA intermediate. The proton acceptor active site deprotonates the incoming queuine, allowing a nucleophilic attack on the C1' of the ribose to form the product. In Caenorhabditis briggsae, this protein is Queuine tRNA-ribosyltransferase catalytic subunit.